Here is a 349-residue protein sequence, read N- to C-terminus: Protein RecA (349 aa).

Gly-69–Thr-76 serves as a coordination point for ATP.

It belongs to the RecA family.

It is found in the cytoplasm. Its function is as follows. Can catalyze the hydrolysis of ATP in the presence of single-stranded DNA, the ATP-dependent uptake of single-stranded DNA by duplex DNA, and the ATP-dependent hybridization of homologous single-stranded DNAs. It interacts with LexA causing its activation and leading to its autocatalytic cleavage. The sequence is that of Protein RecA from Crocosphaera subtropica (strain ATCC 51142 / BH68) (Cyanothece sp. (strain ATCC 51142)).